A 236-amino-acid polypeptide reads, in one-letter code: Probable transcriptional regulatory protein UUR10_0292 (236 aa).

Belongs to the TACO1 family.

The protein localises to the cytoplasm. This Ureaplasma urealyticum serovar 10 (strain ATCC 33699 / Western) protein is Probable transcriptional regulatory protein UUR10_0292.